The chain runs to 84 residues: Beta-defensin 119 (84 aa).

The first 21 residues, 1-21 (MKLLYLFLAILLAIEEPVISG), serve as a signal peptide directing secretion. 3 cysteine pairs are disulfide-bonded: cysteine 28–cysteine 55, cysteine 35–cysteine 49, and cysteine 39–cysteine 56.

Belongs to the beta-defensin family. As to expression, abundant expression in the male reproductive tract only. Abundant expressed in testis and the caput region of epididymis, but low in the corpus region.

The protein localises to the secreted. Its function is as follows. Has antibacterial activity. In Homo sapiens (Human), this protein is Beta-defensin 119 (DEFB119).